The following is a 200-amino-acid chain: Holliday junction branch migration complex subunit RuvA (200 aa).

Residues 1–64 (MIAHLTGLVG…EDAFLLYGFA (64 aa)) are domain I. A domain II region spans residues 65–143 (EAAERDWFRL…RMPAGPGVTI (79 aa)). The interval 144–147 (AAPP) is flexible linker. The segment at 148–200 (ASGGVEADALLALAGLGFRRAEAQPVVGRILARLDGKADLDVVIRESLRELAR) is domain III.

Belongs to the RuvA family. In terms of assembly, homotetramer. Forms an RuvA(8)-RuvB(12)-Holliday junction (HJ) complex. HJ DNA is sandwiched between 2 RuvA tetramers; dsDNA enters through RuvA and exits via RuvB. An RuvB hexamer assembles on each DNA strand where it exits the tetramer. Each RuvB hexamer is contacted by two RuvA subunits (via domain III) on 2 adjacent RuvB subunits; this complex drives branch migration. In the full resolvosome a probable DNA-RuvA(4)-RuvB(12)-RuvC(2) complex forms which resolves the HJ.

The protein resides in the cytoplasm. Functionally, the RuvA-RuvB-RuvC complex processes Holliday junction (HJ) DNA during genetic recombination and DNA repair, while the RuvA-RuvB complex plays an important role in the rescue of blocked DNA replication forks via replication fork reversal (RFR). RuvA specifically binds to HJ cruciform DNA, conferring on it an open structure. The RuvB hexamer acts as an ATP-dependent pump, pulling dsDNA into and through the RuvAB complex. HJ branch migration allows RuvC to scan DNA until it finds its consensus sequence, where it cleaves and resolves the cruciform DNA. The polypeptide is Holliday junction branch migration complex subunit RuvA (Gluconacetobacter diazotrophicus (strain ATCC 49037 / DSM 5601 / CCUG 37298 / CIP 103539 / LMG 7603 / PAl5)).